The sequence spans 119 residues: Large ribosomal subunit protein uL24 (119 aa).

Belongs to the universal ribosomal protein uL24 family. As to quaternary structure, part of the 50S ribosomal subunit.

In terms of biological role, one of two assembly initiator proteins, it binds directly to the 5'-end of the 23S rRNA, where it nucleates assembly of the 50S subunit. Its function is as follows. One of the proteins that surrounds the polypeptide exit tunnel on the outside of the subunit. This is Large ribosomal subunit protein uL24 from Clavibacter sepedonicus (Clavibacter michiganensis subsp. sepedonicus).